Consider the following 283-residue polypeptide: 3-methyl-2-oxobutanoate hydroxymethyltransferase (283 aa).

Residues Asp-46 and Asp-85 each coordinate Mg(2+). 3-methyl-2-oxobutanoate-binding positions include 46 to 47, Asp-85, and Lys-115; that span reads DS. Residue Glu-117 participates in Mg(2+) binding. Glu-184 functions as the Proton acceptor in the catalytic mechanism.

This sequence belongs to the PanB family. In terms of assembly, homodecamer; pentamer of dimers. Requires Mg(2+) as cofactor.

The protein localises to the cytoplasm. It carries out the reaction 3-methyl-2-oxobutanoate + (6R)-5,10-methylene-5,6,7,8-tetrahydrofolate + H2O = 2-dehydropantoate + (6S)-5,6,7,8-tetrahydrofolate. Its pathway is cofactor biosynthesis; (R)-pantothenate biosynthesis; (R)-pantoate from 3-methyl-2-oxobutanoate: step 1/2. Functionally, catalyzes the reversible reaction in which hydroxymethyl group from 5,10-methylenetetrahydrofolate is transferred onto alpha-ketoisovalerate to form ketopantoate. This chain is 3-methyl-2-oxobutanoate hydroxymethyltransferase, found in Acetivibrio thermocellus (strain ATCC 27405 / DSM 1237 / JCM 9322 / NBRC 103400 / NCIMB 10682 / NRRL B-4536 / VPI 7372) (Clostridium thermocellum).